A 1040-amino-acid chain; its full sequence is Multidrug resistance protein MdtB (1040 aa).

Transmembrane regions (helical) follow at residues 25–45, 347–367, 369–389, 396–416, 440–460, 472–492, 537–557, 863–883, 888–908, 910–930, 968–988, and 998–1018; these read LLMAAILLAGIIGYRFLPVAA, LMLAIALVVMIIYLFLRNIPA, IIPGVAVPLSLIGTFAVMVFL, LTLMALTIATGFVVDDAIVVI, IGFTIISLTFSLIAVLIPLLF, FAVTLAVAILISAVVSLTLTP, WLTLSVAFATLLLSVMLWIVI, LGSTVWLIVAAVVAMYIVLGV, FIHPITILSTLPTAGVGALLA, IIAGSELDIIAIIGIILLIGI, ILMTTLAALLGALPLMLSTGV, and IAMVGGLLVSQVLTLFTTPVI.

Belongs to the resistance-nodulation-cell division (RND) (TC 2.A.6) family. MdtB subfamily. In terms of assembly, part of a tripartite efflux system composed of MdtA, MdtB and MdtC. MdtB forms a heteromultimer with MdtC.

It is found in the cell inner membrane. This Salmonella paratyphi A (strain ATCC 9150 / SARB42) protein is Multidrug resistance protein MdtB.